Consider the following 175-residue polypeptide: uncharacterized protein (175 aa).

This is an uncharacterized protein from Human cytomegalovirus (strain AD169) (HHV-5).